A 164-amino-acid chain; its full sequence is FMN reductase (NADH) RutF (164 aa).

Belongs to the non-flavoprotein flavin reductase family. RutF subfamily.

It catalyses the reaction FMNH2 + NAD(+) = FMN + NADH + 2 H(+). Catalyzes the reduction of FMN to FMNH2 which is used to reduce pyrimidine by RutA via the Rut pathway. This is FMN reductase (NADH) RutF from Klebsiella pneumoniae subsp. pneumoniae (strain ATCC 700721 / MGH 78578).